The chain runs to 88 residues: Small ribosomal subunit protein bS20 (88 aa).

The segment at 1–28 (MANTVQARKRARQAVKQNEHNSSLRSKL) is disordered.

It belongs to the bacterial ribosomal protein bS20 family.

Binds directly to 16S ribosomal RNA. In Polynucleobacter necessarius subsp. necessarius (strain STIR1), this protein is Small ribosomal subunit protein bS20.